Reading from the N-terminus, the 409-residue chain is Peptidase T (409 aa).

Position 79 (His79) interacts with Zn(2+). The active site involves Asp81. Asp140 serves as a coordination point for Zn(2+). Glu174 serves as the catalytic Proton acceptor. 3 residues coordinate Zn(2+): Glu175, Asp197, and His379.

Belongs to the peptidase M20B family. Zn(2+) is required as a cofactor.

It localises to the cytoplasm. It carries out the reaction Release of the N-terminal residue from a tripeptide.. Cleaves the N-terminal amino acid of tripeptides. The protein is Peptidase T of Lysinibacillus sphaericus (strain C3-41).